Here is a 367-residue protein sequence, read N- to C-terminus: GDSL esterase/lipase 3 (367 aa).

Residues 1–23 form the signal peptide; it reads MVRLVLIIFFVYTIILSIGSINC. The active-site Nucleophile is Ser-42. Asn-175, Asn-194, and Asn-321 each carry an N-linked (GlcNAc...) asparagine glycan. Catalysis depends on residues Asp-329 and His-332. Asn-351 is a glycosylation site (N-linked (GlcNAc...) asparagine).

This sequence belongs to the 'GDSL' lipolytic enzyme family.

The protein resides in the secreted. This Arabidopsis thaliana (Mouse-ear cress) protein is GDSL esterase/lipase 3 (GLIP3).